A 278-amino-acid polypeptide reads, in one-letter code: NAD-capped RNA hydrolase NudC (278 aa).

Arg84 contributes to the substrate binding site. Positions 114 and 117 each coordinate Zn(2+). Substrate is bound at residue Glu127. Zn(2+) contacts are provided by Cys132 and Cys135. A substrate-binding site is contributed by Tyr140. Residues 141-265 (PRLSPSMIVL…IARHLIDLYL (125 aa)) enclose the Nudix hydrolase domain. Residues Ala174, Glu190, and Glu194 each contribute to the a divalent metal cation site. The short motif at 175 to 196 (GFVEAGESVEQCVVREVREEVG) is the Nudix box element. 208–215 (QNWPFPHS) lines the substrate pocket. A divalent metal cation is bound at residue Glu235. Ala257 is a binding site for substrate.

The protein belongs to the Nudix hydrolase family. NudC subfamily. In terms of assembly, homodimer. It depends on Mg(2+) as a cofactor. Requires Mn(2+) as cofactor. Zn(2+) serves as cofactor.

The catalysed reaction is a 5'-end NAD(+)-phospho-ribonucleoside in mRNA + H2O = a 5'-end phospho-adenosine-phospho-ribonucleoside in mRNA + beta-nicotinamide D-ribonucleotide + 2 H(+). It carries out the reaction NAD(+) + H2O = beta-nicotinamide D-ribonucleotide + AMP + 2 H(+). The enzyme catalyses NADH + H2O = reduced beta-nicotinamide D-ribonucleotide + AMP + 2 H(+). In terms of biological role, mRNA decapping enzyme that specifically removes the nicotinamide adenine dinucleotide (NAD) cap from a subset of mRNAs by hydrolyzing the diphosphate linkage to produce nicotinamide mononucleotide (NMN) and 5' monophosphate mRNA. The NAD-cap is present at the 5'-end of some mRNAs and stabilizes RNA against 5'-processing. Has preference for mRNAs with a 5'-end purine. Catalyzes the hydrolysis of a broad range of dinucleotide pyrophosphates. The chain is NAD-capped RNA hydrolase NudC from Pseudomonas aeruginosa (strain LESB58).